Here is a 934-residue protein sequence, read N- to C-terminus: DNA topoisomerase 1 (934 aa).

Residues 1 to 20 (MADPKTKGRGSGGNGSGRRL) form a disordered region. The region spanning 18–142 (RRLVIVESPT…VKRMVFHEIT (125 aa)) is the Toprim domain. Glu24 and Asp111 together coordinate Mg(2+). Positions 157-616 (DIDLVDAQET…FYFGGDHGVP (460 aa)) constitute a Topo IA-type catalytic domain. An interaction with DNA region spans residues 191–196 (SAGRVQ). Tyr342 (O-(5'-phospho-DNA)-tyrosine intermediate) is an active-site residue. Disordered stretches follow at residues 746–765 (AAQG…RTGS), 842–892 (KRRG…KGDD), and 905–934 (LADR…AKRD). Residues 911–934 (RGPAKRPARKAARKVPAKKAAKRD) show a composition bias toward basic residues.

Belongs to the type IA topoisomerase family. As to quaternary structure, monomer. It depends on Mg(2+) as a cofactor.

The catalysed reaction is ATP-independent breakage of single-stranded DNA, followed by passage and rejoining.. Functionally, releases the supercoiling and torsional tension of DNA, which is introduced during the DNA replication and transcription, by transiently cleaving and rejoining one strand of the DNA duplex. Introduces a single-strand break via transesterification at a target site in duplex DNA. The scissile phosphodiester is attacked by the catalytic tyrosine of the enzyme, resulting in the formation of a DNA-(5'-phosphotyrosyl)-enzyme intermediate and the expulsion of a 3'-OH DNA strand. The free DNA strand then undergoes passage around the unbroken strand, thus removing DNA supercoils. Finally, in the religation step, the DNA 3'-OH attacks the covalent intermediate to expel the active-site tyrosine and restore the DNA phosphodiester backbone. The polypeptide is DNA topoisomerase 1 (Mycobacterium bovis (strain ATCC BAA-935 / AF2122/97)).